A 2534-amino-acid chain; its full sequence is Highly reducing polyketide synthase easB (2534 aa).

A disordered region spans residues Met1–Leu49. The Ketosynthase family 3 (KS3) domain maps to Leu49–Ala470. Active-site for beta-ketoacyl synthase activity residues include Cys222, His356, and His396. Residues Ile587–Lys885 form a malonyl-CoA:ACP transacylase (MAT) domain region. The N-terminal hotdog fold stretch occupies residues His973–Val1111. The segment at His973–Gly1273 is dehydratase (DH) domain. A PKS/mFAS DH domain is found at His973 to Ala1277. The active-site Proton acceptor; for dehydratase activity is His1005. Positions Thr1131–Ala1277 are C-terminal hotdog fold. Asp1193 functions as the Proton donor; for dehydratase activity in the catalytic mechanism. The methyltransferase (CMet) domain stretch occupies residues Lys1395 to Arg1625. An enoyl reductase (ER) domain region spans residues Gly1834–Leu2146. Positions Glu2452–Ser2529 constitute a Carrier domain. A ketoreductase (KR) domain region spans residues Ala2453 to Ala2526. Residue Ser2489 is modified to O-(pantetheine 4'-phosphoryl)serine.

The protein operates within antibiotic biosynthesis. Polyketide synthase; part of the gene cluster that mediates the biosynthesis of emericellamides, secondary metabolites acting as antibiotics. The biosynthesis of emericellamides initiates from the highly reducing polyketide synthase easB which catalyzes the formation of the linear polyketide chain. EasB produces several polyketides that can be further processed by the downstream enzymes. The polyketides are released from easB as linear polyketide carboxylic acids, which are converted to CoA thioesters by the acyl-CoA ligase easD. The substrates are then loaded onto the acyltransferase easC, which shuttles them to the first thiolation (T) domain of the nonribosomal peptide synthetase easA. EasA then performs condensation of the polyketides with one glycine, two alanine, one valine and one leucine residues. A last step of cyclization leads to the production of emericellamides. The sequence is that of Highly reducing polyketide synthase easB from Emericella nidulans (strain FGSC A4 / ATCC 38163 / CBS 112.46 / NRRL 194 / M139) (Aspergillus nidulans).